We begin with the raw amino-acid sequence, 130 residues long: Protein ApaG (130 aa).

The ApaG domain maps to 3–127 (KAETRGITVT…FSLDSPHLRR (125 aa)).

In Methylorubrum populi (strain ATCC BAA-705 / NCIMB 13946 / BJ001) (Methylobacterium populi), this protein is Protein ApaG.